We begin with the raw amino-acid sequence, 459 residues long: Bifunctional protein GlmU (459 aa).

The tract at residues methionine 1–arginine 230 is pyrophosphorylase. UDP-N-acetyl-alpha-D-glucosamine-binding positions include leucine 9–glycine 12, lysine 23, glutamine 73, and glycine 78–threonine 79. Aspartate 103 is a Mg(2+) binding site. UDP-N-acetyl-alpha-D-glucosamine contacts are provided by glycine 140, glutamate 155, asparagine 170, and asparagine 228. Position 228 (asparagine 228) interacts with Mg(2+). The interval valine 231–asparagine 251 is linker. Residues glycine 252–serine 459 are N-acetyltransferase. Residues arginine 333 and lysine 351 each contribute to the UDP-N-acetyl-alpha-D-glucosamine site. Histidine 363 serves as the catalytic Proton acceptor. UDP-N-acetyl-alpha-D-glucosamine-binding residues include tyrosine 366 and asparagine 377. Residues asparagine 386 to tyrosine 387, alanine 423, and arginine 440 each bind acetyl-CoA.

It in the N-terminal section; belongs to the N-acetylglucosamine-1-phosphate uridyltransferase family. This sequence in the C-terminal section; belongs to the transferase hexapeptide repeat family. In terms of assembly, homotrimer. Mg(2+) is required as a cofactor.

The protein localises to the cytoplasm. It catalyses the reaction alpha-D-glucosamine 1-phosphate + acetyl-CoA = N-acetyl-alpha-D-glucosamine 1-phosphate + CoA + H(+). The enzyme catalyses N-acetyl-alpha-D-glucosamine 1-phosphate + UTP + H(+) = UDP-N-acetyl-alpha-D-glucosamine + diphosphate. It participates in nucleotide-sugar biosynthesis; UDP-N-acetyl-alpha-D-glucosamine biosynthesis; N-acetyl-alpha-D-glucosamine 1-phosphate from alpha-D-glucosamine 6-phosphate (route II): step 2/2. It functions in the pathway nucleotide-sugar biosynthesis; UDP-N-acetyl-alpha-D-glucosamine biosynthesis; UDP-N-acetyl-alpha-D-glucosamine from N-acetyl-alpha-D-glucosamine 1-phosphate: step 1/1. Its pathway is bacterial outer membrane biogenesis; LPS lipid A biosynthesis. Catalyzes the last two sequential reactions in the de novo biosynthetic pathway for UDP-N-acetylglucosamine (UDP-GlcNAc). The C-terminal domain catalyzes the transfer of acetyl group from acetyl coenzyme A to glucosamine-1-phosphate (GlcN-1-P) to produce N-acetylglucosamine-1-phosphate (GlcNAc-1-P), which is converted into UDP-GlcNAc by the transfer of uridine 5-monophosphate (from uridine 5-triphosphate), a reaction catalyzed by the N-terminal domain. In Bacillus cytotoxicus (strain DSM 22905 / CIP 110041 / 391-98 / NVH 391-98), this protein is Bifunctional protein GlmU.